Here is a 316-residue protein sequence, read N- to C-terminus: 2,3-dihydroxyphenylpropionate/2,3-dihydroxicinnamic acid 1,2-dioxygenase (316 aa).

His-115 (proton donor) is an active-site residue. His-180 (proton acceptor) is an active-site residue.

Belongs to the LigB/MhpB extradiol dioxygenase family. As to quaternary structure, homotetramer. Requires Fe(2+) as cofactor.

It carries out the reaction 3-(2,3-dihydroxyphenyl)propanoate + O2 = (2Z,4E)-2-hydroxy-6-oxonona-2,4-dienedioate + H(+). The enzyme catalyses (2E)-3-(2,3-dihydroxyphenyl)prop-2-enoate + O2 = (2Z,4E,7E)-2-hydroxy-6-oxonona-2,4,7-trienedioate + H(+). The protein operates within aromatic compound metabolism; 3-phenylpropanoate degradation. Catalyzes the non-heme iron(II)-dependent oxidative cleavage of 2,3-dihydroxyphenylpropionic acid and 2,3-dihydroxicinnamic acid into 2-hydroxy-6-ketononadienedioate and 2-hydroxy-6-ketononatrienedioate, respectively. The protein is 2,3-dihydroxyphenylpropionate/2,3-dihydroxicinnamic acid 1,2-dioxygenase of Rhodococcus rhodochrous.